The primary structure comprises 473 residues: Photosystem II CP43 reaction center protein (473 aa).

A propeptide spanning residues Met1–Glu14 is cleaved from the precursor. Position 15 is an N-acetylthreonine (Thr15). Thr15 carries the phosphothreonine modification. Transmembrane regions (helical) follow at residues Leu69–Ala93, Leu134–Asn155, Lys178–Thr200, Lys255–Ser275, and Trp291–Ala312. Glu367 lines the [CaMn4O5] cluster pocket. The helical transmembrane segment at Arg447–Pro471 threads the bilayer.

This sequence belongs to the PsbB/PsbC family. PsbC subfamily. PSII is composed of 1 copy each of membrane proteins PsbA, PsbB, PsbC, PsbD, PsbE, PsbF, PsbH, PsbI, PsbJ, PsbK, PsbL, PsbM, PsbT, PsbX, PsbY, PsbZ, Psb30/Ycf12, at least 3 peripheral proteins of the oxygen-evolving complex and a large number of cofactors. It forms dimeric complexes. The cofactor is Binds multiple chlorophylls and provides some of the ligands for the Ca-4Mn-5O cluster of the oxygen-evolving complex. It may also provide a ligand for a Cl- that is required for oxygen evolution. PSII binds additional chlorophylls, carotenoids and specific lipids..

The protein resides in the plastid. Its subcellular location is the chloroplast thylakoid membrane. Its function is as follows. One of the components of the core complex of photosystem II (PSII). It binds chlorophyll and helps catalyze the primary light-induced photochemical processes of PSII. PSII is a light-driven water:plastoquinone oxidoreductase, using light energy to abstract electrons from H(2)O, generating O(2) and a proton gradient subsequently used for ATP formation. This chain is Photosystem II CP43 reaction center protein, found in Brachypodium distachyon (Purple false brome).